The following is a 207-amino-acid chain: Urease accessory protein UreG (207 aa).

A GTP-binding site is contributed by 12–19; that stretch reads GPVGAGKT.

Belongs to the SIMIBI class G3E GTPase family. UreG subfamily. In terms of assembly, homodimer. UreD, UreF and UreG form a complex that acts as a GTP-hydrolysis-dependent molecular chaperone, activating the urease apoprotein by helping to assemble the nickel containing metallocenter of UreC. The UreE protein probably delivers the nickel.

It is found in the cytoplasm. Its function is as follows. Facilitates the functional incorporation of the urease nickel metallocenter. This process requires GTP hydrolysis, probably effectuated by UreG. The sequence is that of Urease accessory protein UreG from Cereibacter sphaeroides (strain KD131 / KCTC 12085) (Rhodobacter sphaeroides).